The sequence spans 974 residues: Glycine dehydrogenase (decarboxylating) (974 aa).

At K720 the chain carries N6-(pyridoxal phosphate)lysine.

It belongs to the GcvP family. As to quaternary structure, the glycine cleavage system is composed of four proteins: P, T, L and H. Pyridoxal 5'-phosphate is required as a cofactor.

It catalyses the reaction N(6)-[(R)-lipoyl]-L-lysyl-[glycine-cleavage complex H protein] + glycine + H(+) = N(6)-[(R)-S(8)-aminomethyldihydrolipoyl]-L-lysyl-[glycine-cleavage complex H protein] + CO2. Functionally, the glycine cleavage system catalyzes the degradation of glycine. The P protein binds the alpha-amino group of glycine through its pyridoxal phosphate cofactor; CO(2) is released and the remaining methylamine moiety is then transferred to the lipoamide cofactor of the H protein. This is Glycine dehydrogenase (decarboxylating) from Cupriavidus metallidurans (strain ATCC 43123 / DSM 2839 / NBRC 102507 / CH34) (Ralstonia metallidurans).